Consider the following 496-residue polypeptide: L-arabinose isomerase (496 aa).

Mn(2+)-binding residues include glutamate 302, glutamate 329, histidine 346, and histidine 445.

Belongs to the arabinose isomerase family. Mn(2+) serves as cofactor.

It carries out the reaction beta-L-arabinopyranose = L-ribulose. It functions in the pathway carbohydrate degradation; L-arabinose degradation via L-ribulose; D-xylulose 5-phosphate from L-arabinose (bacterial route): step 1/3. In terms of biological role, catalyzes the conversion of L-arabinose to L-ribulose. The chain is L-arabinose isomerase from Thermotoga neapolitana (strain ATCC 49049 / DSM 4359 / NBRC 107923 / NS-E).